Reading from the N-terminus, the 245-residue chain is Orotidine 5'-phosphate decarboxylase (245 aa).

Substrate is bound by residues aspartate 22, lysine 44, 71–80 (DLKFHDIPNT), threonine 131, arginine 192, glutamine 201, glycine 221, and arginine 222. Lysine 73 serves as the catalytic Proton donor.

Belongs to the OMP decarboxylase family. Type 1 subfamily. In terms of assembly, homodimer.

It carries out the reaction orotidine 5'-phosphate + H(+) = UMP + CO2. The protein operates within pyrimidine metabolism; UMP biosynthesis via de novo pathway; UMP from orotate: step 2/2. Catalyzes the decarboxylation of orotidine 5'-monophosphate (OMP) to uridine 5'-monophosphate (UMP). This is Orotidine 5'-phosphate decarboxylase from Escherichia coli O157:H7.